Here is a 770-residue protein sequence, read N- to C-terminus: Transducin-like enhancer protein 1 (770 aa).

The interval Met-1–Gln-131 is q domain. Disordered stretches follow at residues Leu-128–Pro-157 and His-176–Glu-346. A GP domain region spans residues His-132–Ser-199. Over residues His-146–Pro-157 the composition is skewed to low complexity. Basic and acidic residues-rich tracts occupy residues Ala-178–Ser-196 and Arg-209–Asp-244. A ccN domain region spans residues Asn-200–Pro-266. Residues Lys-225–Lys-228 carry the Nuclear localization signal motif. Residue Ser-237 is modified to Phosphoserine; by CK2. Positions Pro-255–His-264 are enriched in low complexity. A phosphoserine; by CDK1 mark is found at Ser-257, Ser-261, and Ser-265. A compositionally biased stretch (basic and acidic residues) spans Ser-265–Ala-281. The SP domain stretch occupies residues Arg-267–Val-450. Over residues Ser-282–Leu-297 the composition is skewed to low complexity. Ser-284 is subject to Phosphoserine. Basic and acidic residues predominate over residues Lys-298–Ala-308. 6 WD repeats span residues Gly-470–Thr-501, Asn-528–Asp-558, Ser-572–Asp-602, Gly-614–Asp-644, Leu-696–Arg-726, and Lys-737–Glu-767.

This sequence belongs to the WD repeat Groucho/TLE family. In terms of assembly, homooligomer and heterooligomer with other family members. Binds RUNX1, RUNX3, FOXA2, KDM6A, UTY, histone H3, HESX1, ESRRG and the NF-kappa-B subunit RELA. Interacts with HES1 (via WRPW motif). Binds TCF7, LEF1, TCF7L1 and TCF7L2. Interacts with SIX3. Interacts with EFNB1. Interacts with TLE4. Interacts with FOXG1/BF-1; the interaction is inhibited by TLE6/GRG6. Post-translationally, phosphorylated, probably by CDK1. The degree of phosphorylation varies throughout the cell cycle, and is highest at the G2/M transition. Becomes hyperphosphorylated in response to cell differentiation and interaction with HES1 or RUNX1. Ubiquitinated by XIAP/BIRC4. Highly expressed in liver and lung. Detected at slightly lower levels in heart, brain, kidney and testis. Detected in fetal and adult stomach and small intestine, in adult ileum, duodenum and colon. Expressed in bone marrow-derived macrophages. In terms of tissue distribution, most abundant at the base of the crypts of Lieberkuhn in the small intestine.

It localises to the nucleus. The protein resides in the cytoplasm. Functionally, transcriptional corepressor that binds to a number of transcription factors. Inhibits NF-kappa-B-regulated gene expression. Inhibits the transcriptional activation mediated by FOXA2, and by CTNNB1 and TCF family members in Wnt signaling. Enhances FOXG1/BF-1- and HES1-mediated transcriptional repression. The effects of full-length TLE family members may be modulated by association with dominant-negative AES. Unusual function as coactivator for ESRRG. The sequence is that of Transducin-like enhancer protein 1 (Tle1) from Mus musculus (Mouse).